Consider the following 1166-residue polypeptide: DNA-directed RNA polymerase subunit beta (1166 aa).

Belongs to the RNA polymerase beta chain family. As to quaternary structure, the RNAP catalytic core consists of 2 alpha, 1 beta, 1 beta' and 1 omega subunit. When a sigma factor is associated with the core the holoenzyme is formed, which can initiate transcription.

The catalysed reaction is RNA(n) + a ribonucleoside 5'-triphosphate = RNA(n+1) + diphosphate. In terms of biological role, DNA-dependent RNA polymerase catalyzes the transcription of DNA into RNA using the four ribonucleoside triphosphates as substrates. This chain is DNA-directed RNA polymerase subunit beta, found in Nocardioides sp. (strain ATCC BAA-499 / JS614).